Here is a 519-residue protein sequence, read N- to C-terminus: Cytochrome P450 monooxygenase apdE (519 aa).

The chain crosses the membrane as a helical span at residues 27 to 47 (FVFFAFVVYSCFTIAVGWVVY). N-linked (GlcNAc...) asparagine glycans are attached at residues Asn327 and Asn379. Residue Cys466 coordinates heme. N-linked (GlcNAc...) asparagine glycosylation occurs at Asn508.

Belongs to the cytochrome P450 family. The cofactor is heme.

It localises to the membrane. The protein operates within secondary metabolite biosynthesis. In terms of biological role, cytochrome P450 monooxygenase; part of the gene cluster that mediates the biosynthesis of aspyridones. The polyketide-amino acid backbone preaspyridone A is first assembled by the PKS-NRPS hybrid apdA. The assembly of preaspyridone A is initiated by loading of malonyl-CoA onto apdA, followed by decarboxylation to yield the acetyl starter unit. The growing polyketide chain then elongates into a tetraketide. The adpA PKS module catalyzes three Claisen condensations, as well as beta-keto processing and methylation. Alpha-methylation step during polyketide synthesis is a prerequisite and a key checkpoint for chain transfer between PKS and NRPS modules. The downstream NRPS module contains the condensation (C), adenylation (A), and thiolation (T) domains and catalyzes the incorporation of tyrosine via the formation of the L-tyrosinyl-thioester and the amide linkage between L-tyrosinyl-thioester and the tetraketide. The bimodular assembly line is terminated with a reductase (R) domain that facilitates formation and release of the tetramic acid product. Because apdA lacks a designated enoylreductase (ER) domain, the required activity is provided the enoyl reductase apdC. ApdC appears to operate with different stereoselectivity in different PKS cycle. Combined with apdC, apdA is proposed to synthesize preaspyridone A via about 20 enzymatic steps. A number of oxidative steps performed successively by the cytochrome P450 monooxygenases apdE and apdB are required for the conversion of preaspyridone A to aspyridone A. The cytochrome P450 monooxygenase apdE is responsible for the oxidative dephenylation of preaspyridone A. Finally, the predicted FAD-dependent monooxygenase apdD and the acyl-CoA dehydrogenase apdG may be involved in the transformation of aspyridone A into aspyridone B. The protein is Cytochrome P450 monooxygenase apdE of Emericella nidulans (strain FGSC A4 / ATCC 38163 / CBS 112.46 / NRRL 194 / M139) (Aspergillus nidulans).